The chain runs to 381 residues: Succinyl-diaminopimelate desuccinylase (381 aa).

Residue His68 coordinates Zn(2+). The active site involves Asp70. Asp101 contacts Zn(2+). Residue Glu135 is the Proton acceptor of the active site. Zn(2+) is bound by residues Glu136, Glu164, and His350.

This sequence belongs to the peptidase M20A family. DapE subfamily. In terms of assembly, homodimer. Requires Zn(2+) as cofactor. The cofactor is Co(2+).

It catalyses the reaction N-succinyl-(2S,6S)-2,6-diaminopimelate + H2O = (2S,6S)-2,6-diaminopimelate + succinate. Its pathway is amino-acid biosynthesis; L-lysine biosynthesis via DAP pathway; LL-2,6-diaminopimelate from (S)-tetrahydrodipicolinate (succinylase route): step 3/3. Functionally, catalyzes the hydrolysis of N-succinyl-L,L-diaminopimelic acid (SDAP), forming succinate and LL-2,6-diaminopimelate (DAP), an intermediate involved in the bacterial biosynthesis of lysine and meso-diaminopimelic acid, an essential component of bacterial cell walls. The chain is Succinyl-diaminopimelate desuccinylase from Neisseria meningitidis serogroup A / serotype 4A (strain DSM 15465 / Z2491).